A 276-amino-acid chain; its full sequence is Type III pantothenate kinase (276 aa).

18–25 (EIGNSRLH) lines the ATP pocket. Substrate is bound by residues Y116 and 120–123 (GIDR). D122 acts as the Proton acceptor in catalysis. D142 serves as a coordination point for K(+). T145 serves as a coordination point for ATP. T200 serves as a coordination point for substrate.

The protein belongs to the type III pantothenate kinase family. In terms of assembly, homodimer. It depends on NH4(+) as a cofactor. The cofactor is K(+).

The protein resides in the cytoplasm. The catalysed reaction is (R)-pantothenate + ATP = (R)-4'-phosphopantothenate + ADP + H(+). It participates in cofactor biosynthesis; coenzyme A biosynthesis; CoA from (R)-pantothenate: step 1/5. Functionally, catalyzes the phosphorylation of pantothenate (Pan), the first step in CoA biosynthesis. In Nostoc sp. (strain PCC 7120 / SAG 25.82 / UTEX 2576), this protein is Type III pantothenate kinase.